A 146-amino-acid chain; its full sequence is Flagellar assembly factor FliW (146 aa).

This sequence belongs to the FliW family. Interacts with translational regulator CsrA and flagellin(s).

The protein resides in the cytoplasm. Acts as an anti-CsrA protein, binds CsrA and prevents it from repressing translation of its target genes, one of which is flagellin. Binds to flagellin and participates in the assembly of the flagellum. The sequence is that of Flagellar assembly factor FliW from Shouchella clausii (strain KSM-K16) (Alkalihalobacillus clausii).